Here is a 160-residue protein sequence, read N- to C-terminus: Cytochrome b6-f complex subunit 4 (160 aa).

A run of 3 helical transmembrane segments spans residues 36–56 (LLYV…ALAV), 95–115 (LLGI…PFIE), and 131–151 (AVFL…TFPI).

Belongs to the cytochrome b family. PetD subfamily. In terms of assembly, the 4 large subunits of the cytochrome b6-f complex are cytochrome b6, subunit IV (17 kDa polypeptide, PetD), cytochrome f and the Rieske protein, while the 4 small subunits are PetG, PetL, PetM and PetN. The complex functions as a dimer.

Its subcellular location is the cellular thylakoid membrane. Functionally, component of the cytochrome b6-f complex, which mediates electron transfer between photosystem II (PSII) and photosystem I (PSI), cyclic electron flow around PSI, and state transitions. In Rippkaea orientalis (strain PCC 8801 / RF-1) (Cyanothece sp. (strain PCC 8801)), this protein is Cytochrome b6-f complex subunit 4.